The primary structure comprises 255 residues: Imidazole glycerol phosphate synthase subunit HisF (255 aa).

Catalysis depends on residues Asp-12 and Asp-131.

The protein belongs to the HisA/HisF family. As to quaternary structure, heterodimer of HisH and HisF.

The protein resides in the cytoplasm. It catalyses the reaction 5-[(5-phospho-1-deoxy-D-ribulos-1-ylimino)methylamino]-1-(5-phospho-beta-D-ribosyl)imidazole-4-carboxamide + L-glutamine = D-erythro-1-(imidazol-4-yl)glycerol 3-phosphate + 5-amino-1-(5-phospho-beta-D-ribosyl)imidazole-4-carboxamide + L-glutamate + H(+). Its pathway is amino-acid biosynthesis; L-histidine biosynthesis; L-histidine from 5-phospho-alpha-D-ribose 1-diphosphate: step 5/9. Its function is as follows. IGPS catalyzes the conversion of PRFAR and glutamine to IGP, AICAR and glutamate. The HisF subunit catalyzes the cyclization activity that produces IGP and AICAR from PRFAR using the ammonia provided by the HisH subunit. This is Imidazole glycerol phosphate synthase subunit HisF from Zymomonas mobilis subsp. mobilis (strain ATCC 31821 / ZM4 / CP4).